A 243-amino-acid polypeptide reads, in one-letter code: Venom nerve growth factor 1 (243 aa).

The signal sequence occupies residues M1–A18. Residues A19–R125 constitute a propeptide that is removed on maturation. Residues G47 to D66 are compositionally biased toward basic and acidic residues. The segment at G47 to L69 is disordered. 3 disulfides stabilise this stretch: C139-C204, C182-C232, and C192-C234. N148 carries an N-linked (GlcNAc...) asparagine glycan.

This sequence belongs to the NGF-beta family. As to quaternary structure, homodimer; non-covalently linked. As to expression, expressed by the venom gland.

It is found in the secreted. Nerve growth factor is important for the development and maintenance of the sympathetic and sensory nervous systems. It stimulates division and differentiation of sympathetic and embryonic sensory neurons as well as basal forebrain cholinergic neurons in the brain. Its relevance in the snake venom is not clear. However, it has been shown to inhibit metalloproteinase-dependent proteolysis of platelet glycoprotein Ib alpha, suggesting a metalloproteinase inhibition to prevent metalloprotease autodigestion and/or protection against prey proteases. Binds a lipid between the two protein chains in the homodimer. The lipid-bound form promotes histamine relase from mouse mast cells, contrary to the lipid-free form. The chain is Venom nerve growth factor 1 from Pseudonaja textilis (Eastern brown snake).